Here is a 184-residue protein sequence, read N- to C-terminus: Large ribosomal subunit protein uL6 (184 aa).

The protein belongs to the universal ribosomal protein uL6 family. In terms of assembly, part of the 50S ribosomal subunit.

Its function is as follows. This protein binds to the 23S rRNA, and is important in its secondary structure. It is located near the subunit interface in the base of the L7/L12 stalk, and near the tRNA binding site of the peptidyltransferase center. This chain is Large ribosomal subunit protein uL6, found in Thermotoga petrophila (strain ATCC BAA-488 / DSM 13995 / JCM 10881 / RKU-1).